The sequence spans 188 residues: Kininogen (188 aa).

Residues Asn-36, Asn-150, and Asn-182 are each glycosylated (N-linked (GlcNAc...) asparagine).

Bradykinin is released from kininogen by kallikrein. In terms of processing, N-glycosylated. Contains O-acetylated sialic acids as terminal elements on biantennary and triantennary N-glycans.

Functionally, inhibits papain and ficin (cysteine proteinases) but not trypsin (a serine proteinase). The sequence is that of Kininogen from Anarhichas minor (Arctic spotted wolffish).